A 550-amino-acid polypeptide reads, in one-letter code: Keratin, type II cytoskeletal 74 (550 aa).

Positions Met1 to Gln140 are head. Residues Glu141–Leu176 are coil 1A. Residues Glu141–Met468 form the IF rod domain. The segment at Gln177–Tyr195 is linker 1. Positions Ile196 to Ile287 are coil 1B. The interval Gln288–Ile311 is linker 12. The interval Ile312–Glu464 is coil 2. The interval Glu465–Arg550 is tail. The segment at His491–Arg550 is disordered. Residues Ala502–Thr521 show a composition bias toward low complexity. Over residues Arg527–Asp536 the composition is skewed to basic and acidic residues.

Belongs to the intermediate filament family. In terms of assembly, heterotetramer of two type I and two type II keratins.

Has a role in hair formation. Specific component of keratin intermediate filaments in the inner root sheath (IRS) of the hair follicle. The sequence is that of Keratin, type II cytoskeletal 74 (KRT74) from Bos taurus (Bovine).